The primary structure comprises 60 residues: Large ribosomal subunit protein uL30 (60 aa).

The protein belongs to the universal ribosomal protein uL30 family. As to quaternary structure, part of the 50S ribosomal subunit.

The sequence is that of Large ribosomal subunit protein uL30 from Syntrophobacter fumaroxidans (strain DSM 10017 / MPOB).